Reading from the N-terminus, the 110-residue chain is Histone H2A.1 (110 aa).

This sequence belongs to the histone H2A family. As to quaternary structure, the nucleosome is a histone octamer containing two molecules each of H2A, H2B, H3 and H4 assembled in one H3-H4 heterotetramer and two H2A-H2B heterodimers. The octamer wraps approximately 147 bp of DNA. Expressed in the generative cell within the bicellular pollen. Not detected in other reproductive or vegetative tissues.

It localises to the nucleus. Its subcellular location is the chromosome. Functionally, core component of nucleosome. Nucleosomes wrap and compact DNA into chromatin, limiting DNA accessibility to the cellular machineries which require DNA as a template. Histones thereby play a central role in transcription regulation, DNA repair, DNA replication and chromosomal stability. DNA accessibility is regulated via a complex set of post-translational modifications of histones, also called histone code, and nucleosome remodeling. The protein is Histone H2A.1 (gcH2A) of Lilium longiflorum (Trumpet lily).